Consider the following 643-residue polypeptide: NAD-dependent malic enzyme, mitochondrial (643 aa).

Residues 1–38 (PRVRSFIAHQSGITSVIRRSPDIAHRMVRSLSVSSQRN) constitute a mitochondrion transit peptide. Residues Gln116, Arg119, and Arg143 each contribute to the fumarate site. Tyr164 functions as the Proton donor in the catalytic mechanism. Arg219 is a binding site for (S)-malate. Arg219 provides a ligand contact to NAD(+). Lys237 (proton acceptor) is an active-site residue. A divalent metal cation is bound by residues Glu309 and Asp310. NAD(+)-binding residues include Asn313, Asp333, Ala366, Ala369, and Asn472. Asp333 serves as a coordination point for a divalent metal cation. (S)-malate-binding residues include Asn472 and Asn516.

The protein belongs to the malic enzymes family. As to quaternary structure, homotetramer. Mg(2+) serves as cofactor. Requires Mn(2+) as cofactor.

The protein resides in the mitochondrion matrix. It carries out the reaction (S)-malate + NAD(+) = pyruvate + CO2 + NADH. The enzyme catalyses oxaloacetate + H(+) = pyruvate + CO2. Subject to allosteric activation by fumarate. Functionally, NAD-dependent mitochondrial malic enzyme that catalyzes the oxidative decarboxylation of malate to pyruvate. The chain is NAD-dependent malic enzyme, mitochondrial from Ascaris suum (Pig roundworm).